The following is a 350-amino-acid chain: Uroporphyrinogen decarboxylase (350 aa).

Substrate-binding positions include 28 to 32, Asp-78, Tyr-154, Thr-209, and His-325; that span reads RQAGR.

This sequence belongs to the uroporphyrinogen decarboxylase family. As to quaternary structure, homodimer.

Its subcellular location is the cytoplasm. The catalysed reaction is uroporphyrinogen III + 4 H(+) = coproporphyrinogen III + 4 CO2. Its pathway is porphyrin-containing compound metabolism; protoporphyrin-IX biosynthesis; coproporphyrinogen-III from 5-aminolevulinate: step 4/4. Catalyzes the decarboxylation of four acetate groups of uroporphyrinogen-III to yield coproporphyrinogen-III. This Nitrobacter hamburgensis (strain DSM 10229 / NCIMB 13809 / X14) protein is Uroporphyrinogen decarboxylase.